Consider the following 74-residue polypeptide: Coleoptericin (74 aa).

Residues Ser1–Arg74 form a disordered region.

It belongs to the coleoptericin family.

The protein localises to the secreted. In terms of biological role, responsible for the anti Gram-negative activity of immune hemolymph of Z.atratus. This Zophobas atratus (Giant mealworm beetle) protein is Coleoptericin.